Reading from the N-terminus, the 716-residue chain is Polyribonucleotide nucleotidyltransferase (716 aa).

Aspartate 493 and aspartate 499 together coordinate Mg(2+). In terms of domain architecture, KH spans 560-619 (PRMITIKINPEKIRDVIGKGGSVIRALTEETGTTIDISDDGVVTIASTSSEGMAEAKKRI). One can recognise an S1 motif domain in the interval 629–697 (GQVYEGTVLK…EKGRVRLSAK (69 aa)).

This sequence belongs to the polyribonucleotide nucleotidyltransferase family. Mg(2+) serves as cofactor.

It localises to the cytoplasm. The enzyme catalyses RNA(n+1) + phosphate = RNA(n) + a ribonucleoside 5'-diphosphate. In terms of biological role, involved in mRNA degradation. Catalyzes the phosphorolysis of single-stranded polyribonucleotides processively in the 3'- to 5'-direction. This chain is Polyribonucleotide nucleotidyltransferase, found in Paraburkholderia xenovorans (strain LB400).